The chain runs to 299 residues: MKPDAHLVKQFLLNLQDTICQQLTAVDGAEFVEDSWQREAGGGGRSRVLRNGGVFEQAGVNFSHVHGDAMPASATAHRPELAGRSFEAMGVSLVVHPHNPYVPTSHANVRFFIAEKPGAEPVWWFGGGFDLTPFYGFEEDAIHWHRTARDLCLPFGEDVYPRYKKWCDEYFYLKHRNEQRGIGGLFFDDLNTPDFDHCFAFMQAVGKGYTNAYLPIVERRKTMAYGERERNFQLYRRGRYVEFNLVWDRGTLFGLQTGGRTESILMSMPPLVRWEYDYQPKDGSPEAALNEFIKVRDWV.

Serine 92 contributes to the substrate binding site. 2 residues coordinate Mn(2+): histidine 96 and histidine 106. The active-site Proton donor is histidine 106. Residue 108-110 participates in substrate binding; it reads NVR. Mn(2+) is bound by residues histidine 145 and histidine 175. The segment at 240–275 is important for dimerization; the sequence is YVEFNLVWDRGTLFGLQTGGRTESILMSMPPLVRWE. 258-260 provides a ligand contact to substrate; sequence GGR.

The protein belongs to the aerobic coproporphyrinogen-III oxidase family. As to quaternary structure, homodimer. Mn(2+) serves as cofactor.

The protein resides in the cytoplasm. The enzyme catalyses coproporphyrinogen III + O2 + 2 H(+) = protoporphyrinogen IX + 2 CO2 + 2 H2O. The protein operates within porphyrin-containing compound metabolism; protoporphyrin-IX biosynthesis; protoporphyrinogen-IX from coproporphyrinogen-III (O2 route): step 1/1. Functionally, involved in the heme biosynthesis. Catalyzes the aerobic oxidative decarboxylation of propionate groups of rings A and B of coproporphyrinogen-III to yield the vinyl groups in protoporphyrinogen-IX. The sequence is that of Oxygen-dependent coproporphyrinogen-III oxidase from Escherichia coli O7:K1 (strain IAI39 / ExPEC).